Reading from the N-terminus, the 343-residue chain is ATP-dependent (S)-NAD(P)H-hydrate dehydratase (343 aa).

Residues 1 to 42 constitute a mitochondrion transit peptide; sequence MAVHACGAAAAVVALLSAAIALQWSPLYAVLQRALSLHTAHA. The 292-residue stretch at 49–340 folds into the YjeF C-terminal domain; the sequence is LFQLVRNIVP…TEVGTAFSRL (292 aa). An N6-acetyllysine modification is found at lysine 63. At tyrosine 81 the chain carries Phosphotyrosine. (6S)-NADPHX-binding positions include glycine 149 and 202–208; that span reads NHVEFSR. A Phosphoserine modification is found at serine 216. Residues 242–246 and 261–270 contribute to the ATP site; these read KGEQD and GSSRRCGGQG. Aspartate 271 serves as a coordination point for (6S)-NADPHX.

This sequence belongs to the NnrD/CARKD family. Mg(2+) is required as a cofactor.

The protein localises to the mitochondrion. The catalysed reaction is (6S)-NADHX + ATP = ADP + phosphate + NADH + H(+). The enzyme catalyses (6S)-NADPHX + ATP = ADP + phosphate + NADPH + H(+). Catalyzes the dehydration of the S-form of NAD(P)HX at the expense of ATP, which is converted to ADP. Together with NAD(P)HX epimerase, which catalyzes the epimerization of the S- and R-forms, the enzyme allows the repair of both epimers of NAD(P)HX, a damaged form of NAD(P)H that is a result of enzymatic or heat-dependent hydration. This is ATP-dependent (S)-NAD(P)H-hydrate dehydratase from Mus musculus (Mouse).